Reading from the N-terminus, the 121-residue chain is Small ribosomal subunit protein uS11 (121 aa).

The protein belongs to the universal ribosomal protein uS11 family. Part of the 30S ribosomal subunit. Interacts with proteins S7 and S18. Binds to IF-3.

Functionally, located on the platform of the 30S subunit, it bridges several disparate RNA helices of the 16S rRNA. Forms part of the Shine-Dalgarno cleft in the 70S ribosome. This is Small ribosomal subunit protein uS11 from Mycoplasma pneumoniae (strain ATCC 29342 / M129 / Subtype 1) (Mycoplasmoides pneumoniae).